The chain runs to 113 residues: MNRLDFVDQASLRDDIPAFSPGDTINVHVKVIEGAKERIQVFKGVVIRRQGGGIRETFTVRKESYGVGVERTFPVHSPNIDHIEVVTRGDVRRAKLYYLRELRGKKAKIKEKR.

This sequence belongs to the bacterial ribosomal protein bL19 family.

In terms of biological role, this protein is located at the 30S-50S ribosomal subunit interface and may play a role in the structure and function of the aminoacyl-tRNA binding site. The chain is Large ribosomal subunit protein bL19 from Mycobacterium marinum (strain ATCC BAA-535 / M).